Consider the following 167-residue polypeptide: Leptin (167 aa).

Positions 1–21 are cleaved as a signal peptide; it reads MRCGPLCRFLWLWPYLSYIEA. An intrachain disulfide couples cysteine 117 to cysteine 167.

The protein belongs to the leptin family.

Its subcellular location is the secreted. Functionally, key player in the regulation of energy balance and body weight control. Once released into the circulation, has central and peripheral effects by binding LEPR, found in many tissues, which results in the activation of several major signaling pathways. In the hypothalamus, acts as an appetite-regulating factor that induces a decrease in food intake and an increase in energy consumption by inducing anorexinogenic factors and suppressing orexigenic neuropeptides, also regulates bone mass and secretion of hypothalamo-pituitary-adrenal hormones. In the periphery, increases basal metabolism, influences reproductive function, regulates pancreatic beta-cell function and insulin secretion, is pro-angiogenic for endothelial cell and affects innate and adaptive immunity. In the arcuate nucleus of the hypothalamus, activates by depolarization POMC neurons inducing FOS and SOCS3 expression to release anorexigenic peptides and inhibits by hyperpolarization NPY neurons inducing SOCS3 with a consequent reduction on release of orexigenic peptides. In addition to its known satiety inducing effect, has a modulatory role in nutrient absorption. In the intestine, reduces glucose absorption by enterocytes by activating PKC and leading to a sequential activation of p38, PI3K and ERK signaling pathways which exerts an inhibitory effect on glucose absorption. Acts as a growth factor on certain tissues, through the activation of different signaling pathways increases expression of genes involved in cell cycle regulation such as CCND1, via JAK2-STAT3 pathway, or VEGFA, via MAPK1/3 and PI3K-AKT1 pathways. May also play an apoptotic role via JAK2-STAT3 pathway and up-regulation of BIRC5 expression. Pro-angiogenic, has mitogenic activity on vascular endothelial cells and plays a role in matrix remodeling by regulating the expression of matrix metalloproteinases (MMPs) and tissue inhibitors of metalloproteinases (TIMPs). In innate immunity, modulates the activity and function of neutrophils by increasing chemotaxis and the secretion of oxygen radicals. Increases phagocytosis by macrophages and enhances secretion of pro-inflammatory mediators. Increases cytotoxic ability of NK cells. Plays a pro-inflammatory role, in synergy with IL1B, by inducing NOS2 which promotes the production of IL6, IL8 and Prostaglandin E2, through a signaling pathway that involves JAK2, PI3K, MAP2K1/MEK1 and MAPK14/p38. In adaptive immunity, promotes the switch of memory T-cells towards T helper-1 cell immune responses. Increases CD4(+)CD25(-) T-cell proliferation and reduces autophagy during TCR (T-cell receptor) stimulation, through MTOR signaling pathway activation and BCL2 up-regulation. The sequence is that of Leptin (LEP) from Ursus thibetanus (Asiatic black bear).